Consider the following 133-residue polypeptide: Nickel-responsive regulator (133 aa).

Residues His76, His87, His89, and Cys95 each coordinate Ni(2+).

Belongs to the transcriptional regulatory CopG/NikR family. In terms of assembly, homotetramer. It depends on Ni(2+) as a cofactor.

Its function is as follows. Transcriptional repressor of the nikABCDE operon. Is active in the presence of excessive concentrations of intracellular nickel. The polypeptide is Nickel-responsive regulator (Enterobacter sp. (strain 638)).